The following is a 340-amino-acid chain: Glycerol-3-phosphate dehydrogenase [NAD(P)+] (340 aa).

Residues W11, R33, and K110 each contribute to the NADPH site. Sn-glycerol 3-phosphate is bound by residues K110, G144, and S146. A148 lines the NADPH pocket. 5 residues coordinate sn-glycerol 3-phosphate: K199, D252, S262, R263, and N264. K199 functions as the Proton acceptor in the catalytic mechanism. R263 lines the NADPH pocket. NADPH contacts are provided by V287 and E289.

Belongs to the NAD-dependent glycerol-3-phosphate dehydrogenase family.

The protein localises to the cytoplasm. It carries out the reaction sn-glycerol 3-phosphate + NAD(+) = dihydroxyacetone phosphate + NADH + H(+). It catalyses the reaction sn-glycerol 3-phosphate + NADP(+) = dihydroxyacetone phosphate + NADPH + H(+). It functions in the pathway membrane lipid metabolism; glycerophospholipid metabolism. Functionally, catalyzes the reduction of the glycolytic intermediate dihydroxyacetone phosphate (DHAP) to sn-glycerol 3-phosphate (G3P), the key precursor for phospholipid synthesis. In Polynucleobacter necessarius subsp. necessarius (strain STIR1), this protein is Glycerol-3-phosphate dehydrogenase [NAD(P)+].